Consider the following 506-residue polypeptide: MGIKGLIPFLSEKVPSSISELSLECLSGESLAIDASAALYQFTIAIRDSSYFSSLVNSKGESTSHIYGLMNRCSKLLEYGIKPVFVFDSKPPELKSKTLDKRRQKREEAKTDFKKAISEGDKESAKKLVGRTVKVTKDMNDSAKKLLRLMGIPVIEALEEAEAQCAYLVTKNLCHFVASEDTDTLVFGGWFLLRNVTSSANKKIVKVDLQKVLDGLEFNFDQFVDFCILCGCDYCDTLEGVGPKTAYSLVKKYQSLEEIVRFKGGDYDEFKEAKDYFLSPKVNEYDENSVKMGTIDPEGLTEFLVQENNFSKERVEKFIEKLLKFKTKKIQTSLLSFLTNPQPTNKSKSLDEGPKQSSTEDYKVNTNPSTKGSNVYTTDTNSTKDTKGIECTATTTNNNLENKVKIENEENDTGRRDSIDDLFKEFEDETNLFEQDEFEPKSKEYNLEKQHELELNVHNRNVILIDDDDDEVLTTANSEKMNCEIGKVKEEPNKKGKFSLISIYIF.

Residues 1 to 106 (MGIKGLIPFL…KTLDKRRQKR (106 aa)) form an N-domain region. Aspartate 34 lines the Mg(2+) pocket. Residues arginine 47 and arginine 72 each coordinate DNA. Aspartate 88, glutamate 160, glutamate 162, aspartate 181, and aspartate 183 together coordinate Mg(2+). The interval 124–253 (SAKKLVGRTV…KTAYSLVKKY (130 aa)) is I-domain. Glutamate 160 contributes to the DNA binding site. Residues glycine 231 and aspartate 233 each contribute to the DNA site. Residue aspartate 233 coordinates Mg(2+). An interaction with PCNA region spans residues 330–338 (IQTSLLSFL). A compositionally biased stretch (polar residues) spans 338 to 347 (LTNPQPTNKS). A disordered region spans residues 338–388 (LTNPQPTNKSKSLDEGPKQSSTEDYKVNTNPSTKGSNVYTTDTNSTKDTKG). Over residues 348–363 (KSLDEGPKQSSTEDYK) the composition is skewed to basic and acidic residues. The span at 364–381 (VNTNPSTKGSNVYTTDTN) shows a compositional bias: polar residues.

Belongs to the XPG/RAD2 endonuclease family. FEN1 subfamily. Interacts with PCNA. Three molecules of FEN1 bind to one PCNA trimer with each molecule binding to one PCNA monomer. PCNA stimulates the nuclease activity without altering cleavage specificity. The cofactor is Mg(2+). In terms of processing, phosphorylated. Phosphorylation upon DNA damage induces relocalization to the nuclear plasma.

It is found in the nucleus. The protein resides in the nucleolus. It localises to the nucleoplasm. The protein localises to the mitochondrion. Its function is as follows. Structure-specific nuclease with 5'-flap endonuclease and 5'-3' exonuclease activities involved in DNA replication and repair. During DNA replication, cleaves the 5'-overhanging flap structure that is generated by displacement synthesis when DNA polymerase encounters the 5'-end of a downstream Okazaki fragment. It enters the flap from the 5'-end and then tracks to cleave the flap base, leaving a nick for ligation. Also involved in the long patch base excision repair (LP-BER) pathway, by cleaving within the apurinic/apyrimidinic (AP) site-terminated flap. Acts as a genome stabilization factor that prevents flaps from equilibrating into structures that lead to duplications and deletions. Also possesses 5'-3' exonuclease activity on nicked or gapped double-stranded DNA, and exhibits RNase H activity. Also involved in replication and repair of rDNA and in repairing mitochondrial DNA. The protein is Flap endonuclease 1 of Theileria annulata.